A 279-amino-acid chain; its full sequence is Acetylglutamate kinase (279 aa).

Substrate is bound by residues 64–65, arginine 86, and asparagine 177; that span reads GG.

It belongs to the acetylglutamate kinase family. ArgB subfamily.

It is found in the cytoplasm. The catalysed reaction is N-acetyl-L-glutamate + ATP = N-acetyl-L-glutamyl 5-phosphate + ADP. It participates in amino-acid biosynthesis; L-arginine biosynthesis; N(2)-acetyl-L-ornithine from L-glutamate: step 2/4. Its function is as follows. Catalyzes the ATP-dependent phosphorylation of N-acetyl-L-glutamate. The protein is Acetylglutamate kinase of Campylobacter jejuni subsp. doylei (strain ATCC BAA-1458 / RM4099 / 269.97).